The primary structure comprises 156 residues: Putative pre-16S rRNA nuclease (156 aa).

The protein belongs to the YqgF nuclease family.

The protein resides in the cytoplasm. Could be a nuclease involved in processing of the 5'-end of pre-16S rRNA. This chain is Putative pre-16S rRNA nuclease, found in Ehrlichia canis (strain Jake).